The following is a 276-amino-acid chain: CTD small phosphatase-like protein (276 aa).

Residues 1–25 (MDGPAIITQVTNPKEDEGRLPGAGE) form a disordered region. One can recognise an FCP1 homology domain in the interval 102 to 260 (LDYGKKCVVI…LDLIPFFEGL (159 aa)). Residue Asp-112 is the 4-aspartylphosphate intermediate of the active site. Asp-112, Asp-114, and Asn-223 together coordinate Mg(2+). Asp-114 functions as the Proton donor in the catalytic mechanism.

As to quaternary structure, interacts with REST. Monomer. The cofactor is Mg(2+). In terms of tissue distribution, expression is restricted to non-neuronal tissues.

It is found in the nucleus. It catalyses the reaction O-phospho-L-seryl-[protein] + H2O = L-seryl-[protein] + phosphate. It carries out the reaction O-phospho-L-threonyl-[protein] + H2O = L-threonyl-[protein] + phosphate. Functionally, recruited by REST to neuronal genes that contain RE-1 elements, leading to neuronal gene silencing in non-neuronal cells. Preferentially catalyzes the dephosphorylation of 'Ser-5' within the tandem 7 residue repeats in the C-terminal domain (CTD) of the largest RNA polymerase II subunit POLR2A. Negatively regulates RNA polymerase II transcription, possibly by controlling the transition from initiation/capping to processive transcript elongation. This Homo sapiens (Human) protein is CTD small phosphatase-like protein (CTDSPL).